The primary structure comprises 910 residues: Harmonin (910 aa).

Residues 1 to 86 are N-terminal domain; sequence MDRKVAREFR…LTPRRSRKLK (86 aa). PDZ domains lie at 87-171 and 211-295; these read EVRL…GLIP and KVFI…AGRE. The mediates interaction with MYO7B stretch occupies residues 194-833; sequence GVRGGLGSPG…KAWNQGGDWI (640 aa). Ser-219 carries the post-translational modification Phosphoserine. Coiled-coil stretches lie at residues 299–377 and 417–482; these read TDRE…WEED and TIRK…DLEE. Residues 563-688 are disordered; the sequence is VMPHPPSVNS…PPRGPGVSTI (126 aa). Over residues 564–582 the composition is skewed to pro residues; it reads MPHPPSVNSPSKVPAPPVL. Positions 583-596 are enriched in low complexity; it reads PSSGHVSSSSSPWV. The segment covering 599 to 611 has biased composition (pro residues); that stretch reads TPPPIPIPPPPSI. Positions 650-664 are enriched in polar residues; that stretch reads NTHSGKPSSSPTTER. Residues 752-839 form the PDZ 3 domain; sequence DVRLLRIKKE…GDWIDLVVAV (88 aa). Positions 890–910 are disordered; it reads KSRERNQTDPSWRPASSAPSP. Positions 899 to 910 are enriched in low complexity; that stretch reads PSWRPASSAPSP.

As to quaternary structure, part of the IMAC/intermicrovillar adhesion complex/intermicrovillar tip-link complex composed of ANKS4B, MYO7B, USH1C, CDHR2 and CDHR5. Part of a complex composed of USH1C, USH1G and MYO7A. Interacts with F-actin. Interacts with USH2A. Interacts with SLC4A7. Interacts (via PDZ1 domain) with the C-terminus of USHBP1. Interacts (via N-terminus and PDZ 2 domain) with CDH23. Interacts with USH1G. Interacts with MYO7B. Interacts with CDHR2 and CDHR5; may mediate their interaction with MYO7B at the microvilli tip. Interacts (via PDZ 1 domain) with ANKS4B. Interacts (via PDZ 1 domain) with DOCK4. As to expression, detected in stereocilia of cochlear hair cells (at protein level). Isoform 1 is expressed in the eye, cochlea, vestibule, heart, kidney, small intestine and testis; it is barely visible in skeletal muscle, liver, and lung and is absent from the brain. Isoforms 2 and 3 are expressed in the cochlea and vestibule.

It is found in the cytoplasm. The protein resides in the cytosol. Its subcellular location is the cytoskeleton. The protein localises to the cell projection. It localises to the microvillus. In terms of biological role, anchoring/scaffolding protein that is a part of the functional network formed by USH1C, USH1G, CDH23 and MYO7A that mediates mechanotransduction in cochlear hair cells. Required for normal development and maintenance of cochlear hair cell bundles. As part of the intermicrovillar adhesion complex/IMAC plays a role in brush border differentiation, controlling microvilli organization and length. Probably plays a central regulatory role in the assembly of the complex, recruiting CDHR2, CDHR5 and MYO7B to the microvilli tips. In Mus musculus (Mouse), this protein is Harmonin (Ush1c).